Reading from the N-terminus, the 152-residue chain is Large ribosomal subunit protein uL22 (152 aa).

It belongs to the universal ribosomal protein uL22 family. As to quaternary structure, part of the 50S ribosomal subunit.

In terms of biological role, this protein binds specifically to 23S rRNA. It makes multiple contacts with different domains of the 23S rRNA in the assembled 50S subunit and ribosome. The globular domain of the protein is located near the polypeptide exit tunnel on the outside of the subunit, while an extended beta-hairpin is found that lines the wall of the exit tunnel in the center of the 70S ribosome. This chain is Large ribosomal subunit protein uL22, found in Cenarchaeum symbiosum (strain A).